Reading from the N-terminus, the 70-residue chain is Small ribosomal subunit protein bS21 (70 aa).

Belongs to the bacterial ribosomal protein bS21 family.

The chain is Small ribosomal subunit protein bS21 from Helicobacter pylori (strain P12).